The sequence spans 109 residues: Aquaporin-2 (109 aa).

Residues 1–6 (SIAFSR) are Cytoplasmic-facing. The helical transmembrane segment at 7–27 (AVLAEFLATLLFVFFGLGSAL) threads the bilayer. The Extracellular portion of the chain corresponds to 28 to 35 (NWPQAMPS). The helical transmembrane segment at 36-54 (VLQIAMAFGLAIGTLVQAL) threads the bilayer. At 55-59 (GHVSG) the chain is on the cytoplasmic side. Residues 60–69 (AHINPAVTVA) constitute an intramembrane region (discontinuously helical). Positions 63-65 (NPA) match the NPA 1 motif. Topologically, residues 70 to 80 (CLVGCHVSFLR) are cytoplasmic. The chain crosses the membrane as a helical span at residues 81–102 (AAFYVAAQLLGAVAGAALLHEI). Residues 103–109 (TPPDIRR) lie on the Extracellular side of the membrane.

It belongs to the MIP/aquaporin (TC 1.A.8) family. As to quaternary structure, homotetramer. Post-translationally, serine phosphorylation is necessary and sufficient for expression at the apical membrane. Endocytosis is not phosphorylation-dependent. In terms of processing, N-glycosylated.

It is found in the apical cell membrane. The protein localises to the basolateral cell membrane. The protein resides in the cell membrane. Its subcellular location is the cytoplasmic vesicle membrane. It localises to the golgi apparatus. It is found in the trans-Golgi network membrane. The catalysed reaction is H2O(in) = H2O(out). It catalyses the reaction glycerol(in) = glycerol(out). Forms a water-specific channel that provides the plasma membranes of renal collecting duct with high permeability to water, thereby permitting water to move in the direction of an osmotic gradient. Plays an essential role in renal water homeostasis. Could also be permeable to glycerol. The sequence is that of Aquaporin-2 from Equus caballus (Horse).